Reading from the N-terminus, the 284-residue chain is Nucleotide-binding protein Shewmr7_3352 (284 aa).

Residue 8–15 (GRSGSGKS) coordinates ATP. 56–59 (DVRN) provides a ligand contact to GTP.

The protein belongs to the RapZ-like family.

Displays ATPase and GTPase activities. This Shewanella sp. (strain MR-7) protein is Nucleotide-binding protein Shewmr7_3352.